Consider the following 369-residue polypeptide: Chaperone protein DnaJ (369 aa).

The 65-residue stretch at 5-69 (DYYDVLGISK…NKKAQYDRFG (65 aa)) folds into the J domain. The CR-type zinc-finger motif lies at 131–213 (GTTKNVSVDI…CSGAGRVKAK (83 aa)). Positions 144, 147, 161, 164, 187, 190, 201, and 204 each coordinate Zn(2+). 4 CXXCXGXG motif repeats span residues 144–151 (CGHCHGSG), 161–168 (CSKCHGQG), 187–194 (CPQCQGEG), and 201–208 (CHVCSGAG).

This sequence belongs to the DnaJ family. Homodimer. It depends on Zn(2+) as a cofactor.

It localises to the cytoplasm. Functionally, participates actively in the response to hyperosmotic and heat shock by preventing the aggregation of stress-denatured proteins and by disaggregating proteins, also in an autonomous, DnaK-independent fashion. Unfolded proteins bind initially to DnaJ; upon interaction with the DnaJ-bound protein, DnaK hydrolyzes its bound ATP, resulting in the formation of a stable complex. GrpE releases ADP from DnaK; ATP binding to DnaK triggers the release of the substrate protein, thus completing the reaction cycle. Several rounds of ATP-dependent interactions between DnaJ, DnaK and GrpE are required for fully efficient folding. Also involved, together with DnaK and GrpE, in the DNA replication of plasmids through activation of initiation proteins. This Acholeplasma laidlawii protein is Chaperone protein DnaJ.